A 280-amino-acid chain; its full sequence is Undecaprenyl-diphosphatase (280 aa).

The next 8 membrane-spanning stretches (helical) occupy residues 1-21 (MEWI…FLPI), 40-60 (GAAF…VFFW), 89-109 (WLVV…QNAI), 116-136 (LWIV…ADAV), 146-166 (LTVK…IPGV), 191-211 (FLLA…KIVA), 227-247 (LATV…LKFI), and 260-280 (IALG…ATLS).

It belongs to the UppP family.

Its subcellular location is the cell membrane. The catalysed reaction is di-trans,octa-cis-undecaprenyl diphosphate + H2O = di-trans,octa-cis-undecaprenyl phosphate + phosphate + H(+). Functionally, catalyzes the dephosphorylation of undecaprenyl diphosphate (UPP). Confers resistance to bacitracin. The chain is Undecaprenyl-diphosphatase from Renibacterium salmoninarum (strain ATCC 33209 / DSM 20767 / JCM 11484 / NBRC 15589 / NCIMB 2235).